The following is a 125-amino-acid chain: Protein Turandot F (125 aa).

Residues 1-19 (MKTVILFGFLLALLGYLEA) form the signal peptide.

This sequence belongs to the Turandot family.

It localises to the secreted. Functionally, a humoral factor that may play a role in stress tolerance. This Drosophila melanogaster (Fruit fly) protein is Protein Turandot F.